The chain runs to 193 residues: Holliday junction branch migration complex subunit RuvA (193 aa).

The interval 1-64 (MIGRIAGTLL…EDAHLLFGFA (64 aa)) is domain I. The interval 65–144 (TATERNTFRE…DLGHAPGATP (80 aa)) is domain II. Residues 145–151 (LADSAVD) form a flexible linker region. The domain III stretch occupies residues 151-193 (DILNALLALGYSEKEAAQAIKQVPAGTGVSDGIKLALKALSKG).

Belongs to the RuvA family. As to quaternary structure, homotetramer. Forms an RuvA(8)-RuvB(12)-Holliday junction (HJ) complex. HJ DNA is sandwiched between 2 RuvA tetramers; dsDNA enters through RuvA and exits via RuvB. An RuvB hexamer assembles on each DNA strand where it exits the tetramer. Each RuvB hexamer is contacted by two RuvA subunits (via domain III) on 2 adjacent RuvB subunits; this complex drives branch migration. In the full resolvosome a probable DNA-RuvA(4)-RuvB(12)-RuvC(2) complex forms which resolves the HJ.

It is found in the cytoplasm. Functionally, the RuvA-RuvB-RuvC complex processes Holliday junction (HJ) DNA during genetic recombination and DNA repair, while the RuvA-RuvB complex plays an important role in the rescue of blocked DNA replication forks via replication fork reversal (RFR). RuvA specifically binds to HJ cruciform DNA, conferring on it an open structure. The RuvB hexamer acts as an ATP-dependent pump, pulling dsDNA into and through the RuvAB complex. HJ branch migration allows RuvC to scan DNA until it finds its consensus sequence, where it cleaves and resolves the cruciform DNA. In Cupriavidus metallidurans (strain ATCC 43123 / DSM 2839 / NBRC 102507 / CH34) (Ralstonia metallidurans), this protein is Holliday junction branch migration complex subunit RuvA.